Reading from the N-terminus, the 668-residue chain is Protein IQ-DOMAIN 14 (668 aa).

The tract at residues 1–11 is calmodulin-binding; the sequence is MVKKGSWFSAI. Disordered stretches follow at residues 16 to 54 and 66 to 305; these read TPHSKEKLANEPERKSGKEKKKKGFGKLRHGETNSFLPI and GEAE…PRAV. Positions 18–31 are enriched in basic and acidic residues; sequence HSKEKLANEPERKS. Residues 32–43 show a composition bias toward basic residues; it reads GKEKKKKGFGKL. Over residues 78–96 the composition is skewed to pro residues; the sequence is PPTPDRPNPYSASPPPRPA. Composition is skewed to low complexity over residues 97 to 120 and 166 to 175; these read SPRVASPRPTSPRVASPRVPSPRA and PSSASANAPP. The span at 269-279 shows a compositional bias: pro residues; the sequence is PTTPKPPSPRS. IQ domains lie at 321 to 350 and 343 to 372; these read QHASATKIQGAFRGYMARKSFRALKGLVRL and ALKGLVRLQGVVRGYSVKRQTINAMKYMQQ. Disordered stretches follow at residues 399–431 and 476–561; these read AKWAASEAGNDNWDDSVLTKEERDSRSQRKTDA and SPAP…SLTS. The segment covering 415-431 has biased composition (basic and acidic residues); sequence VLTKEERDSRSQRKTDA. Residues 516–529 are compositionally biased toward polar residues; sequence DTSTPRSSRSTFHT.

This sequence belongs to the IQD family. Binds to multiple calmodulin (CaM) in the presence of Ca(2+) and CaM-like proteins. In terms of tissue distribution, expressed in hypocotyls, cotyledons, leaves and petioles.

The protein resides in the cell membrane. The protein localises to the cytoplasm. It localises to the cytoskeleton. Its function is as follows. May be involved in cooperative interactions with calmodulins or calmodulin-like proteins. Recruits calmodulin proteins to microtubules, thus being a potential scaffold in cellular signaling and trafficking. Regulates cell and organ shapes (prevents twisting) in aerial parts probably by regulating transverse microtubules (MT) arrays alignment. Regulates the formation of oval xylem secondary cell-wall deposition pits through microtubule-dependent lateral inhibition of Rho GTPase domains, thus confining the area of active ROP domains within the lattice of the cortical microtubules. May associate with nucleic acids and regulate gene expression at the transcriptional or post-transcriptional level. This Arabidopsis thaliana (Mouse-ear cress) protein is Protein IQ-DOMAIN 14.